The primary structure comprises 88 residues: uncharacterized protein (88 aa).

The tract at residues 1–88 (MPHLPELSKQ…IRRGNPSGVA (88 aa)) is disordered. The segment covering 21–65 (YRAKGEDLENSHHNNESRLAEGVHYDRNKAPALQEREKASTEKVN) has biased composition (basic and acidic residues).

Its function is as follows. Involved in osmoadaptation. This is an uncharacterized protein from Emericella nidulans (strain FGSC A4 / ATCC 38163 / CBS 112.46 / NRRL 194 / M139) (Aspergillus nidulans).